We begin with the raw amino-acid sequence, 500 residues long: L-arabinose isomerase (500 aa).

The Mn(2+) site is built by Glu306, Glu333, His350, and His450.

The protein belongs to the arabinose isomerase family. As to quaternary structure, homohexamer. It depends on Mn(2+) as a cofactor.

It carries out the reaction beta-L-arabinopyranose = L-ribulose. Its pathway is carbohydrate degradation; L-arabinose degradation via L-ribulose; D-xylulose 5-phosphate from L-arabinose (bacterial route): step 1/3. Catalyzes the conversion of L-arabinose to L-ribulose. The chain is L-arabinose isomerase from Yersinia enterocolitica serotype O:8 / biotype 1B (strain NCTC 13174 / 8081).